The following is a 260-amino-acid chain: Alpha-acetolactate decarboxylase (260 aa).

Belongs to the alpha-acetolactate decarboxylase family.

It catalyses the reaction (2S)-2-acetolactate + H(+) = (R)-acetoin + CO2. Its pathway is polyol metabolism; (R,R)-butane-2,3-diol biosynthesis; (R,R)-butane-2,3-diol from pyruvate: step 2/3. Its function is as follows. Converts acetolactate into acetoin, which can be excreted by the cells. This may be a mechanism for controlling the internal pH of cells in the stationary stage. The protein is Alpha-acetolactate decarboxylase (budA) of Klebsiella aerogenes (Enterobacter aerogenes).